Reading from the N-terminus, the 375-residue chain is tRNA-specific 2-thiouridylase MnmA (375 aa).

ATP is bound by residues 8–15 and M34; that span reads GLSGGVDS. The interval 104–106 is interaction with target base in tRNA; that stretch reads NPD. Residue C109 is the Nucleophile of the active site. Cysteines 109 and 205 form a disulfide. G133 lines the ATP pocket. An interaction with tRNA region spans residues 155-157; that stretch reads KDQ. Catalysis depends on C205, which acts as the Cysteine persulfide intermediate. Residues 313–314 form an interaction with tRNA region; it reads RY.

The protein belongs to the MnmA/TRMU family.

The protein resides in the cytoplasm. It carries out the reaction S-sulfanyl-L-cysteinyl-[protein] + uridine(34) in tRNA + AH2 + ATP = 2-thiouridine(34) in tRNA + L-cysteinyl-[protein] + A + AMP + diphosphate + H(+). In terms of biological role, catalyzes the 2-thiolation of uridine at the wobble position (U34) of tRNA, leading to the formation of s(2)U34. The polypeptide is tRNA-specific 2-thiouridylase MnmA (Acholeplasma laidlawii (strain PG-8A)).